A 422-amino-acid polypeptide reads, in one-letter code: MQYLEIKGGKKLSGSVTISGAKNAALPVIAATILSDKDVTLTNLPNVVDIRTLLKLLTMLGGVVEHEGTVAKINNGSITSTKAVYEIVSQMRASILVLGPLLTRFGECEVSLPGGCAIGQRPIDLHLKALEAMGAKITIESGYVHAVAPNGLHGAKIIFDKITVGGTENIIMAAALAKGTTIIINAAKEPEIVQLCEMIADAGVKIEGIGTNELTIEGTDGIPLAFKTVEIIPDRIEAGTYLCAGAITKSEITLNKVNAEHIRASIDKLESMGFTFDIAKDSITIHPTDIINPVNLITIEYPGFPTDMQAQFMAVAAMADGESLIEERLFENRFMHVSELNRLGADIWLKGSVAAVKGVKELHGADVMATDLRASSALVLAGLVAEGTTNVRRIYHLDRGYDNLEGKLAALGADIVRKEEEK.

K22 to N23 serves as a coordination point for phosphoenolpyruvate. UDP-N-acetyl-alpha-D-glucosamine is bound at residue R92. C116 acts as the Proton donor in catalysis. The residue at position 116 (C116) is a 2-(S-cysteinyl)pyruvic acid O-phosphothioketal. UDP-N-acetyl-alpha-D-glucosamine contacts are provided by residues R121–L125, D307, and L329.

This sequence belongs to the EPSP synthase family. MurA subfamily.

The protein resides in the cytoplasm. It carries out the reaction phosphoenolpyruvate + UDP-N-acetyl-alpha-D-glucosamine = UDP-N-acetyl-3-O-(1-carboxyvinyl)-alpha-D-glucosamine + phosphate. Its pathway is cell wall biogenesis; peptidoglycan biosynthesis. In terms of biological role, cell wall formation. Adds enolpyruvyl to UDP-N-acetylglucosamine. This Sulfurovum sp. (strain NBC37-1) protein is UDP-N-acetylglucosamine 1-carboxyvinyltransferase.